The chain runs to 201 residues: Holliday junction branch migration complex subunit RuvA (201 aa).

A domain I region spans residues 1–64; that stretch reads MFAYIKGVLA…EFSHTLYGFL (64 aa). The domain II stretch occupies residues 65-143; that stretch reads SYQERDIFEI…AIGHLDTSDH (79 aa). The segment at 144 to 153 is flexible linker; it reads IEPLTQDPKS. Positions 153 to 201 are domain III; that stretch reads SKSVQDAMLALINLGYNQTTAQKAIKQGMKELPEEIDLAQLITVALKHV.

Belongs to the RuvA family. As to quaternary structure, homotetramer. Forms an RuvA(8)-RuvB(12)-Holliday junction (HJ) complex. HJ DNA is sandwiched between 2 RuvA tetramers; dsDNA enters through RuvA and exits via RuvB. An RuvB hexamer assembles on each DNA strand where it exits the tetramer. Each RuvB hexamer is contacted by two RuvA subunits (via domain III) on 2 adjacent RuvB subunits; this complex drives branch migration. In the full resolvosome a probable DNA-RuvA(4)-RuvB(12)-RuvC(2) complex forms which resolves the HJ.

Its subcellular location is the cytoplasm. In terms of biological role, the RuvA-RuvB-RuvC complex processes Holliday junction (HJ) DNA during genetic recombination and DNA repair, while the RuvA-RuvB complex plays an important role in the rescue of blocked DNA replication forks via replication fork reversal (RFR). RuvA specifically binds to HJ cruciform DNA, conferring on it an open structure. The RuvB hexamer acts as an ATP-dependent pump, pulling dsDNA into and through the RuvAB complex. HJ branch migration allows RuvC to scan DNA until it finds its consensus sequence, where it cleaves and resolves the cruciform DNA. This chain is Holliday junction branch migration complex subunit RuvA, found in Protochlamydia amoebophila (strain UWE25).